Reading from the N-terminus, the 1183-residue chain is SR-related and CTD-associated factor 4 (1183 aa).

In terms of domain architecture, CID spans 1-139 (MDAVNAFNQE…PLLDMAAGTS (139 aa)). Lysine 49 is modified (N6-acetyllysine). At serine 154 the chain carries Phosphoserine. Disordered stretches follow at residues 299–324 (VPVP…VQQP) and 348–561 (HHQV…QIKS). The span at 367-380 (APPPFPPMPQPGMP) shows a compositional bias: pro residues. Residues 381 to 398 (QPGMAQPGLAQPGMAQPT) show a composition bias toward low complexity. A compositionally biased stretch (pro residues) spans 399–410 (MPQPGMPQPGMP). The span at 411-428 (QPGMAQPGLAQPGMAQPG) shows a compositional bias: low complexity. Pro residues predominate over residues 429–440 (MPQPAMPQPAMP). Positions 457–469 (PTFQSTFQPQNEP) are enriched in polar residues. Positions 488 to 498 (EVKRHVPESRK) are enriched in basic and acidic residues. Basic residues predominate over residues 499-536 (SRSRSPKRRRSRSGSRSRRSRHRRSRSRSRDRRRHSPR). Residues 538–553 (RSQERRDREKERERRQ) show a composition bias toward basic and acidic residues. One can recognise an RRM domain in the interval 569 to 643 (TTLWVGQLDK…KSIKIAWALN (75 aa)). Disordered stretches follow at residues 691-722 (WKGI…IPKP), 800-858 (LPPG…SLPT), and 920-1183 (MPPH…EPPR). Serine 717 carries the phosphoserine modification. Pro residues-rich tracts occupy residues 800-823 (LPPG…PPIS) and 920-952 (MPPH…PPHG). Residues 1006–1020 (SPSQQPAPAQQQPPQ) show a composition bias toward low complexity. Position 1042 is a phosphoserine (serine 1042). Residues 1047-1122 (VENDRERYGS…NRKEKHEVAD (76 aa)) show a composition bias toward basic and acidic residues. Over residues 1136–1145 (QVGTIDTVSE) the composition is skewed to polar residues.

In terms of assembly, interacts with POLR2A; via C-terminal heptapeptide repeat domain (CTD) phosphorylated at 'Ser-2' and 'Ser-5'.

The protein resides in the nucleus. Anti-terminator protein required to prevent early mRNA termination during transcription. Together with SCAF8, acts by suppressing the use of early, alternative poly(A) sites, thereby preventing the accumulation of non-functional truncated proteins. Mechanistically, associates with the phosphorylated C-terminal heptapeptide repeat domain (CTD) of the largest RNA polymerase II subunit (POLR2A), and subsequently binds nascent RNA upstream of early polyadenylation sites to prevent premature mRNA transcript cleavage and polyadenylation. Independently of SCAF8, also acts as a suppressor of transcriptional readthrough. The sequence is that of SR-related and CTD-associated factor 4 from Mus musculus (Mouse).